The chain runs to 567 residues: Malate synthase, glyoxysomal (567 aa).

The active-site Proton acceptor is Arg182. Asp468 acts as the Proton donor in catalysis. Positions 565–567 match the Microbody targeting signal motif; that stretch reads SKL.

The protein belongs to the malate synthase family.

The protein resides in the glyoxysome. The catalysed reaction is glyoxylate + acetyl-CoA + H2O = (S)-malate + CoA + H(+). The protein operates within carbohydrate metabolism; glyoxylate cycle; (S)-malate from isocitrate: step 2/2. The sequence is that of Malate synthase, glyoxysomal from Gossypium hirsutum (Upland cotton).